A 109-amino-acid chain; its full sequence is VPVVMAGVLGIYGLIIAVIISTGINPKAKPYYLFDGYAHLSSGLACGLAGLAAGMAIGIVGDAGVRANAQQPKLFVGMILILIFAEALALYGLIVGIILSSRAGQSRAD.

A helical transmembrane segment spans residues 1 to 20 (VPVVMAGVLGIYGLIIAVII). Topologically, residues 21–39 (STGINPKAKPYYLFDGYAH) are lumenal. Residues 40–61 (LSSGLACGLAGLAAGMAIGIVG) form a helical membrane-spanning segment. Topologically, residues 62–73 (DAGVRANAQQPK) are cytoplasmic. A helical transmembrane segment spans residues 74–99 (LFVGMILILIFAEALALYGLIVGIIL). Residues 100–109 (SSRAGQSRAD) are Lumenal-facing.

The protein belongs to the V-ATPase proteolipid subunit family. As to quaternary structure, V-ATPase is a heteromultimeric enzyme composed of a peripheral catalytic V1 complex (main components: subunits A, B, C, D, E, and F) attached to an integral membrane V0 proton pore complex (main component: the proteolipid protein; which is present as a hexamer that forms the proton-conducting pore). High expression in the mesocotyl tip of etiolated seedlings compared to the base.

Its subcellular location is the vacuole membrane. Functionally, proton-conducting pore forming subunit of the membrane integral V0 complex of vacuolar ATPase. V-ATPase is responsible for acidifying a variety of intracellular compartments in eukaryotic cells. The sequence is that of V-type proton ATPase 16 kDa proteolipid subunit from Zea mays (Maize).